Consider the following 401-residue polypeptide: Probable [pyruvate dehydrogenase (acetyl-transferring)] kinase, mitochondrial (401 aa).

A Histidine kinase domain is found at 131–360 (LIELRESDGV…DACIYLKAVP (230 aa)). Residues 247–254 (ELFKNAMR), Asp286, 305–306 (ST), and 321–326 (GYGYGL) contribute to the ATP site.

This sequence belongs to the PDK/BCKDK protein kinase family.

Its subcellular location is the mitochondrion matrix. The catalysed reaction is L-seryl-[pyruvate dehydrogenase E1 alpha subunit] + ATP = O-phospho-L-seryl-[pyruvate dehydrogenase E1 alpha subunit] + ADP + H(+). In terms of biological role, inhibits the mitochondrial pyruvate dehydrogenase complex by phosphorylation of the E1 alpha subunit, thus contributing to the regulation of glucose metabolism. Required for normal lifespan. The polypeptide is Probable [pyruvate dehydrogenase (acetyl-transferring)] kinase, mitochondrial (pdhk-2) (Caenorhabditis elegans).